The chain runs to 804 residues: Leucine--tRNA ligase (804 aa).

The 'HIGH' region motif lies at 40–51 (PYPSGAGLHVGH). The 'KMSKS' region motif lies at 576–580 (KMSKS). An ATP-binding site is contributed by K579.

This sequence belongs to the class-I aminoacyl-tRNA synthetase family.

It is found in the cytoplasm. The catalysed reaction is tRNA(Leu) + L-leucine + ATP = L-leucyl-tRNA(Leu) + AMP + diphosphate. In Staphylococcus haemolyticus (strain JCSC1435), this protein is Leucine--tRNA ligase.